The following is a 929-amino-acid chain: Chaperone protein ClpC1, chloroplastic (929 aa).

The transit peptide at 1–38 directs the protein to the chloroplast; the sequence is MAMATRVLAQSTPPSLACYQRNVPSRGSGRSRRSVKMM. One can recognise a Clp R domain in the interval 95-237; sequence FERFTEKAIK…RTQVIRMVGE (143 aa). Repeat regions lie at residues 98–163 and 173–237; these read FTEK…IGRG and FTPR…MVGE. An i region spans residues 257-504; sequence LEEYGTNLTK…RVRLRHAQVP (248 aa). 302–309 serves as a coordination point for ATP; the sequence is GEPGVGKT. Residues 511–546 enclose the UVR domain; that stretch reads EKELRQITKEKNEAVRGQDFEKAGTLRDREIELRAE. Residues 552–571 form a disordered region; the sequence is AKGKEMSKAESETGEEGPMV. Basic and acidic residues predominate over residues 553-562; it reads KGKEMSKAES. Residues 571–762 are II; the sequence is VTESDIQHIV…LLIMTSNVGS (192 aa). 645–652 lines the ATP pocket; sequence GPTGVGKS. Polar residues predominate over residues 908 to 919; it reads LNGGSGTPTTSL. The tract at residues 908 to 929 is disordered; it reads LNGGSGTPTTSLEEQEDSLPVA. Over residues 920 to 929 the composition is skewed to acidic residues; sequence EEQEDSLPVA.

This sequence belongs to the ClpA/ClpB family. ClpC subfamily. Homodimer. May form hexamer and interact with Clp core. Interacts (via N-terminus) with CLPS1. Interacts with CLPF. In terms of tissue distribution, highly expressed in rosette leaves. Expressed in roots, stems and inflorescences. Expressed in photosynthetic green tissues with high levels in young, developing leaf tissues.

Its subcellular location is the plastid. The protein resides in the chloroplast stroma. The protein localises to the chloroplast membrane. Its function is as follows. Molecular chaperone that hydrolyzes ATP and is associated with the chloroplast protein import apparatus. May function as the motor for chloroplast protein translocation, as translocation requires ATP hydrolysis in the stroma. May interact with a ClpP-like protease involved in degradation of denatured proteins in the chloroplast. Involved in the regulation of chlorophyll b biosynthesis through the destabilization of chlorophyllide a oxygenase (CAO) protein in response to the accumulation of chlorophyll b. Involved in leaf iron homeostasis. This chain is Chaperone protein ClpC1, chloroplastic, found in Arabidopsis thaliana (Mouse-ear cress).